The chain runs to 268 residues: Kynurenine formamidase (268 aa).

The short motif at 33 to 37 is the HGGXW element; the sequence is HGGGW. Serine 107 acts as the Nucleophile in catalysis. Active-site residues include aspartate 219 and histidine 251.

It belongs to the kynurenine formamidase family. As to quaternary structure, homodimer.

It carries out the reaction N-formyl-L-kynurenine + H2O = L-kynurenine + formate + H(+). The protein operates within amino-acid degradation; L-tryptophan degradation via kynurenine pathway; L-kynurenine from L-tryptophan: step 2/2. Catalyzes the hydrolysis of N-formyl-L-kynurenine to L-kynurenine, the second step in the kynurenine pathway of tryptophan degradation. Kynurenine may be further oxidized to nicotinic acid, NAD(H) and NADP(H). Required for elimination of toxic metabolites. In Scheffersomyces stipitis (strain ATCC 58785 / CBS 6054 / NBRC 10063 / NRRL Y-11545) (Yeast), this protein is Kynurenine formamidase.